A 492-amino-acid polypeptide reads, in one-letter code: MINNPSLLGTSIPVTKNVGSITQIIGPVLDIVFSPGKMPNIYNSLIVRGQNSAGQEINVTCEVQQLLGNNEVRAVATSATDGLMREMEVLDTGAPSSVPVGEATLGRIFNVLGEAVDNLGPVDAGLTSPIHRAAPSFIQLDTKLSIFETGIKVVDLLVPYRRGGKIGLFGGAGVGKTVLIMELINNIAKAHGGVSVFGGVGERTREGNDLYMEMKESKVINEQNIAESKVALVYGQMNEPPGARMRVGSTALTMAEYFRDVNKQDVLLFIDNIFRFVQAGSEVSALLGRMPSAVGYQPTLGTEMGTLQERITSTKEGSITSIQAVYVPADDLTDPAPATTFAHLDATTVLSRGLAAKGIYPAVDPLDSTSTMLQPWIVGEEHYETAQGVKQTLQRYKELQDIIAIPGLDELSEEDRLTVARARRIERFLSQPFFVAEVFTGSPGKYVSLRETIKGFQMILAGELDNLPEQAFYLVGNIDEVAAKAVVSQSGD.

ATP is bound at residue 170 to 177 (GGAGVGKT).

Belongs to the ATPase alpha/beta chains family. As to quaternary structure, F-type ATPases have 2 components, CF(1) - the catalytic core - and CF(0) - the membrane proton channel. CF(1) has five subunits: alpha(3), beta(3), gamma(1), delta(1), epsilon(1). CF(0) has four main subunits: a(1), b(1), b'(1) and c(9-12).

It is found in the plastid membrane. It catalyses the reaction ATP + H2O + 4 H(+)(in) = ADP + phosphate + 5 H(+)(out). Functionally, produces ATP from ADP in the presence of a proton gradient across the membrane. The catalytic sites are hosted primarily by the beta subunits. The sequence is that of ATP synthase subunit beta, plastid from Aneura mirabilis (Parasitic liverwort).